An 897-amino-acid polypeptide reads, in one-letter code: Cytokine receptor common subunit beta (897 aa).

The first 16 residues, 1–16, serve as a signal peptide directing secretion; that stretch reads MVLAQGLLSMALLALC. The Extracellular segment spans residues 17–443; the sequence is WERSLAGAEE…WDTESVLPMW (427 aa). Cys-35 and Cys-45 form a disulfide bridge. The N-linked (GlcNAc...) asparagine glycan is linked to Asn-58. Intrachain disulfides connect Cys-75–Cys-96 and Cys-86–Cys-91. Residues 133–240 form the Fibronectin type-III 1 domain; the sequence is PPEPRDLQIS…PEVCWDSQPG (108 aa). N-linked (GlcNAc...) asparagine glycosylation is present at Asn-191. 2 disulfides stabilise this stretch: Cys-250/Cys-260 and Cys-289/Cys-306. The Fibronectin type-III 2 domain occupies 339-436; that stretch reads QMAPPSLNVT…EWSEARSWDT (98 aa). Asn-346 is a glycosylation site (N-linked (GlcNAc...) asparagine). The WSXWS motif signature appears at 425-429; it reads WSEWS. The chain crosses the membrane as a helical span at residues 444–460; it reads VLALIVIFLTIAVLLAL. Over 461-897 the chain is Cytoplasmic; the sequence is RFCGIYGYRL…WEVNKPGEVC (437 aa). Positions 474–482 match the Box 1 motif motif; it reads WEEKIPNPS. Disordered stretches follow at residues 498-517, 532-630, 648-812, and 830-849; these read GSMS…WGSR, SEVS…EYLC, PGQA…QPEG, and PGPL…PEIK. The span at 564 to 574 shows a compositional bias: pro residues; it reads EQPPSPQPGPP. The span at 723–752 shows a compositional bias: low complexity; the sequence is SGASSVSLVPSLGLPSDQTPSLCPGLASGP. Tyr-766 carries the post-translational modification Phosphotyrosine. Over residues 830 to 840 the composition is skewed to low complexity; sequence PGPLSLRSKPS.

The protein belongs to the type I cytokine receptor family. Type 4 subfamily. As to quaternary structure, heterodimer of an alpha and a beta subunit. The beta subunit is common to the IL3, IL5 and GM-CSF receptors. The signaling GM-CSF receptor complex is a dodecamer of two head-to-head hexamers of two alpha, two beta, and two ligand subunits. Interacts with TMEM102; this interaction occurs preferentially in the absence of CSF2. Interacts with FCER1G; this interaction is direct. Interacts with LYN. Interacts with JAK1. Post-translationally, may be phosphorylated by LYN.

It localises to the membrane. Its function is as follows. Cell surface receptor that plays a role in immune response and controls the production and differentiation of hematopoietic progenitor cells into lineage-restricted cells. Acts by forming an heterodimeric receptor through interaction with different partners such as IL3RA, IL5RA or CSF2RA. In turn, participates in various signaling pathways including interleukin-3, interleukin-5 and granulocyte-macrophage colony-stimulating factor/CSF2 pathways. In unstimulated conditions, interacts constitutively with JAK1 and ligand binding leads to JAK1 stimulation and subsequent activation of the JAK-STAT pathway. In Homo sapiens (Human), this protein is Cytokine receptor common subunit beta (CSF2RB).